A 164-amino-acid polypeptide reads, in one-letter code: UPF0225 protein Shewana3_2159 (164 aa).

Belongs to the UPF0225 family.

The chain is UPF0225 protein Shewana3_2159 from Shewanella sp. (strain ANA-3).